Reading from the N-terminus, the 257-residue chain is Acetylglutamate kinase (257 aa).

Substrate-binding positions include 43 to 44, arginine 65, and asparagine 157; that span reads GG. ATP-binding positions include 180–185 and 208–210; these read DISGIL and IIT.

It belongs to the acetylglutamate kinase family. ArgB subfamily. As to quaternary structure, homodimer.

It is found in the cytoplasm. It carries out the reaction N-acetyl-L-glutamate + ATP = N-acetyl-L-glutamyl 5-phosphate + ADP. The protein operates within amino-acid biosynthesis; L-arginine biosynthesis; N(2)-acetyl-L-ornithine from L-glutamate: step 2/4. In terms of biological role, catalyzes the ATP-dependent phosphorylation of N-acetyl-L-glutamate. The protein is Acetylglutamate kinase of Sodalis glossinidius (strain morsitans).